The primary structure comprises 87 residues: MTRYFCCGSYFPGYPIYGTNFHGTFRATPLNCVVPLGSPLNYGCGCNGYSSLGYSFGGSNINNLGGCYGGSFYRPWGSGSGFGYSTY.

Residues 43 to 84 (GCGCNGYSSLGYSFGGSNINNLGGCYGGSFYRPWGSGSGFGY) form an 11 X 2 AA repeats of G-[YCGS] region.

Belongs to the KRTAP type 7 family. As to quaternary structure, interacts with hair keratins. In terms of tissue distribution, expressed in the upper portion of the hair cortex.

In the hair cortex, hair keratin intermediate filaments are embedded in an interfilamentous matrix, consisting of hair keratin-associated proteins (KRTAP), which are essential for the formation of a rigid and resistant hair shaft through their extensive disulfide bond cross-linking with abundant cysteine residues of hair keratins. The matrix proteins include the high-sulfur and high-glycine-tyrosine keratins. The protein is Keratin-associated protein 7-1 (KRTAP7-1) of Homo sapiens (Human).